We begin with the raw amino-acid sequence, 55 residues long: Large ribosomal subunit protein bL33 (55 aa).

Belongs to the bacterial ribosomal protein bL33 family.

This Vibrio cholerae serotype O1 (strain ATCC 39541 / Classical Ogawa 395 / O395) protein is Large ribosomal subunit protein bL33.